A 218-amino-acid polypeptide reads, in one-letter code: NAD(P)H-quinone oxidoreductase subunit I (218 aa).

4Fe-4S ferredoxin-type domains are found at residues 55–84 (GRIH…VDWV) and 95–124 (RNYS…MTEE). [4Fe-4S] cluster is bound by residues C64, C67, C70, C74, C104, C107, C110, and C114. The disordered stretch occupies residues 168-218 (EVQPHGVDPSRPRAGQRPDQVLSSLKQNAGGSAGNEGESATSTNTSKGSAE). Over residues 208-218 (TSTNTSKGSAE) the composition is skewed to polar residues.

This sequence belongs to the complex I 23 kDa subunit family. In terms of assembly, NDH-1 is composed of at least 11 different subunits. [4Fe-4S] cluster is required as a cofactor.

Its subcellular location is the cellular thylakoid membrane. It catalyses the reaction a plastoquinone + NADH + (n+1) H(+)(in) = a plastoquinol + NAD(+) + n H(+)(out). The enzyme catalyses a plastoquinone + NADPH + (n+1) H(+)(in) = a plastoquinol + NADP(+) + n H(+)(out). Its function is as follows. NDH-1 shuttles electrons from an unknown electron donor, via FMN and iron-sulfur (Fe-S) centers, to quinones in the respiratory and/or the photosynthetic chain. The immediate electron acceptor for the enzyme in this species is believed to be plastoquinone. Couples the redox reaction to proton translocation, and thus conserves the redox energy in a proton gradient. This Synechococcus sp. (strain WH7803) protein is NAD(P)H-quinone oxidoreductase subunit I.